A 249-amino-acid polypeptide reads, in one-letter code: Eukaryotic translation initiation factor 3 subunit K (249 aa).

Residues 46 to 222 (FDCYANLALL…VKVPTNKENE (177 aa)) form the PCI domain.

The protein belongs to the eIF-3 subunit K family. Component of the eukaryotic translation initiation factor 3 (eIF-3) complex.

It localises to the cytoplasm. In terms of biological role, component of the eukaryotic translation initiation factor 3 (eIF-3) complex, which is involved in protein synthesis of a specialized repertoire of mRNAs and, together with other initiation factors, stimulates binding of mRNA and methionyl-tRNAi to the 40S ribosome. The eIF-3 complex specifically targets and initiates translation of a subset of mRNAs involved in cell proliferation. This chain is Eukaryotic translation initiation factor 3 subunit K, found in Aspergillus fumigatus (strain CBS 144.89 / FGSC A1163 / CEA10) (Neosartorya fumigata).